We begin with the raw amino-acid sequence, 1309 residues long: Tetratricopeptide repeat protein 41 (1309 aa).

TPR repeat units lie at residues 399 to 432, 651 to 684, 817 to 851, 859 to 892, 989 to 1024, and 1042 to 1079; these read PQLEMDFLNEDSNVLVFSLLIEVFMAAISLKPCI, WIQEKPNGLLYFQHQSLRNAVEHKMLGVTISVRE, LTFLLFLWGFLTLLGNRRANNLFSGAAPFLVSVQS, LKAQNAIGELYLDIGMMQKGLTYFQKAWSNLLRF, MSYFSSAVLMEFLFSRSQRKQAIEYYKQVIKIKEKA, and SDTLCKLAGQLLSGDFCHHATMEAVSYLYRSLDLRAAH.

It localises to the cytoplasm. The protein is Tetratricopeptide repeat protein 41 of Rattus norvegicus (Rat).